We begin with the raw amino-acid sequence, 227 residues long: ATP synthase F(0) complex subunit a (227 aa).

The next 6 membrane-spanning stretches (helical) occupy residues 14–34, 69–89, 98–118, 139–159, 165–185, and 189–209; these read FLGI…FPSP, WAMI…LGLL, QLSM…LIGM, IPIL…ALGV, LTAG…MLSI, and IATL…AVAM.

Belongs to the ATPase A chain family. As to quaternary structure, component of the ATP synthase complex composed at least of ATP5F1A/subunit alpha, ATP5F1B/subunit beta, ATP5MC1/subunit c (homooctomer), MT-ATP6/subunit a, MT-ATP8/subunit 8, ATP5ME/subunit e, ATP5MF/subunit f, ATP5MG/subunit g, ATP5MK/subunit k, ATP5MJ/subunit j, ATP5F1C/subunit gamma, ATP5F1D/subunit delta, ATP5F1E/subunit epsilon, ATP5PF/subunit F6, ATP5PB/subunit b, ATP5PD/subunit d, ATP5PO/subunit OSCP. ATP synthase complex consists of a soluble F(1) head domain (subunits alpha(3) and beta(3)) - the catalytic core - and a membrane F(0) domain - the membrane proton channel (subunits c, a, 8, e, f, g, k and j). These two domains are linked by a central stalk (subunits gamma, delta, and epsilon) rotating inside the F1 region and a stationary peripheral stalk (subunits F6, b, d, and OSCP). Interacts with DNAJC30; interaction is direct.

It localises to the mitochondrion inner membrane. The enzyme catalyses H(+)(in) = H(+)(out). Its function is as follows. Subunit a, of the mitochondrial membrane ATP synthase complex (F(1)F(0) ATP synthase or Complex V) that produces ATP from ADP in the presence of a proton gradient across the membrane which is generated by electron transport complexes of the respiratory chain. ATP synthase complex consist of a soluble F(1) head domain - the catalytic core - and a membrane F(1) domain - the membrane proton channel. These two domains are linked by a central stalk rotating inside the F(1) region and a stationary peripheral stalk. During catalysis, ATP synthesis in the catalytic domain of F(1) is coupled via a rotary mechanism of the central stalk subunits to proton translocation. With the subunit c (ATP5MC1), forms the proton-conducting channel in the F(0) domain, that contains two crucial half-channels (inlet and outlet) that facilitate proton movement from the mitochondrial intermembrane space (IMS) into the matrix. Protons are taken up via the inlet half-channel and released through the outlet half-channel, following a Grotthuss mechanism. The chain is ATP synthase F(0) complex subunit a from Polypterus ornatipinnis (Ornate bichir).